A 179-amino-acid chain; its full sequence is Macro domain-containing protein XCC3184 (179 aa).

The Macro domain maps to 1-175 (MRIEVWQGDI…AYHQALATQE (175 aa)).

It belongs to the MacroD-type family.

This is Macro domain-containing protein XCC3184 from Xanthomonas campestris pv. campestris (strain ATCC 33913 / DSM 3586 / NCPPB 528 / LMG 568 / P 25).